The primary structure comprises 84 residues: MPLAKDLLHPTPEEEKRKHKKKRLVQSPNSYFMDVKCPGCYKITTVFSHAQTVVLCVGCSTVLCQPTGGKARLTEGCSFRRKQH.

Basic and acidic residues predominate over residues 1 to 16; it reads MPLAKDLLHPTPEEEK. Residues 1 to 23 form a disordered region; it reads MPLAKDLLHPTPEEEKRKHKKKR. The C4-type zinc-finger motif lies at 37–59; sequence CPGCYKITTVFSHAQTVVLCVGC.

This sequence belongs to the eukaryotic ribosomal protein eS27 family. Component of the small ribosomal subunit. Part of the small subunit (SSU) processome, composed of more than 70 proteins and the RNA chaperone small nucleolar RNA (snoRNA) U3. It depends on Zn(2+) as a cofactor.

The protein localises to the cytoplasm. It localises to the nucleus. Its subcellular location is the nucleolus. Functionally, component of the small ribosomal subunit. The ribosome is a large ribonucleoprotein complex responsible for the synthesis of proteins in the cell. Required for proper rRNA processing and maturation of 18S rRNAs. Part of the small subunit (SSU) processome, first precursor of the small eukaryotic ribosomal subunit. During the assembly of the SSU processome in the nucleolus, many ribosome biogenesis factors, an RNA chaperone and ribosomal proteins associate with the nascent pre-rRNA and work in concert to generate RNA folding, modifications, rearrangements and cleavage as well as targeted degradation of pre-ribosomal RNA by the RNA exosome. This chain is Small ribosomal subunit protein eS27 (rps27), found in Xenopus laevis (African clawed frog).